The chain runs to 393 residues: CCA-adding enzyme (393 aa).

2 residues coordinate ATP: G27 and R30. Residues G27 and R30 each contribute to the CTP site. Residues D40 and D42 each coordinate Mg(2+). Residues R111, D154, R157, R160, and R163 each coordinate ATP. Positions 111, 154, 157, 160, and 163 each coordinate CTP.

The protein belongs to the tRNA nucleotidyltransferase/poly(A) polymerase family. Bacterial CCA-adding enzyme type 3 subfamily. In terms of assembly, homodimer. Requires Mg(2+) as cofactor.

It catalyses the reaction a tRNA precursor + 2 CTP + ATP = a tRNA with a 3' CCA end + 3 diphosphate. The enzyme catalyses a tRNA with a 3' CCA end + 2 CTP + ATP = a tRNA with a 3' CCACCA end + 3 diphosphate. Catalyzes the addition and repair of the essential 3'-terminal CCA sequence in tRNAs without using a nucleic acid template. Adds these three nucleotides in the order of C, C, and A to the tRNA nucleotide-73, using CTP and ATP as substrates and producing inorganic pyrophosphate. tRNA 3'-terminal CCA addition is required both for tRNA processing and repair. Also involved in tRNA surveillance by mediating tandem CCA addition to generate a CCACCA at the 3' terminus of unstable tRNAs. While stable tRNAs receive only 3'-terminal CCA, unstable tRNAs are marked with CCACCA and rapidly degraded. This chain is CCA-adding enzyme, found in Listeria innocua serovar 6a (strain ATCC BAA-680 / CLIP 11262).